A 2260-amino-acid polypeptide reads, in one-letter code: Protein Ycf2 (2260 aa).

G1614–S1621 is an ATP binding site.

This sequence belongs to the Ycf2 family.

The protein resides in the plastid. Its subcellular location is the chloroplast stroma. Functionally, probable ATPase of unknown function. Its presence in a non-photosynthetic plant (Epifagus virginiana) and experiments in tobacco indicate that it has an essential function which is probably not related to photosynthesis. The polypeptide is Protein Ycf2 (Dioscorea elephantipes (Elephant's foot yam)).